The following is a 75-amino-acid chain: MNITKSYVVIFFLVMLTNSLSNSDILVSSVIETSKYDVCFIPCTRRYEDRECNDDCLAKDFNDGGCVDGRCCCKY.

Positions 1 to 19 (MNITKSYVVIFFLVMLTNS) are cleaved as a signal peptide. 4 cysteine pairs are disulfide-bonded: cysteine 39-cysteine 73, cysteine 43-cysteine 66, cysteine 52-cysteine 71, and cysteine 56-cysteine 72.

The protein belongs to the DEFL family.

Its subcellular location is the secreted. This chain is Defensin-like protein 59, found in Arabidopsis thaliana (Mouse-ear cress).